The following is a 492-amino-acid chain: FAD-linked oxidoreductase pgmH (492 aa).

Positions 54–224 constitute an FAD-binding PCMH-type domain; it reads SIRLATLVVY…TEFKYRVHKQ (171 aa).

Belongs to the oxygen-dependent FAD-linked oxidoreductase family. The cofactor is FAD.

The protein operates within pigment biosynthesis. Its pathway is secondary metabolite biosynthesis. FAD-linked oxidoreductase; part of the gene cluster that mediates the biosynthesis of pleosporalin A, ascomycone A, as well as a third cryptic naphthoquinone derived pigment, all responsible for the coloration of conidia. Essential for the production of pleosporalin A, but not the 2 other final products. The pathway begins with the biosynthesis of the cyclized heptaketide 3-acetonyl-1,6,8-trihydroxy-2-naphthaldehyde by the NR-PKS pgmA. The C-6 hydroxyl group is further methylated by the O-methyltransferase pgmB to yield fusarubinaldehyde which is in turn oxidized by the cytochrome P450 monooxygenase pgmC at C-9. The C-1 hydroxyl group is then methylated spontaneously. Although pgmE, pgmD and pgmH are essential for the production of pleosporalin A, it is not the case for the 2 other final products and it remains difficult to assign a specific function to each enzyme. PgmF and pgmG seem not to be involved in pigment biosynthesis although they were regulated by the cluster-specific transcription factor pgmR. This is FAD-linked oxidoreductase pgmH from Aspergillus terreus.